Reading from the N-terminus, the 65-residue chain is Large ribosomal subunit protein bL35 (65 aa).

Belongs to the bacterial ribosomal protein bL35 family.

The protein is Large ribosomal subunit protein bL35 of Xanthomonas campestris pv. campestris (strain ATCC 33913 / DSM 3586 / NCPPB 528 / LMG 568 / P 25).